Reading from the N-terminus, the 488-residue chain is Mannitol 2-dehydrogenase (488 aa).

NAD(+) is bound at residue 37–48 (IVHVGVGGFHRA).

It belongs to the mannitol dehydrogenase family. In terms of assembly, monomer.

The catalysed reaction is D-mannitol + NAD(+) = D-fructose + NADH + H(+). Functionally, catalyzes the NAD(H)-dependent interconversion of D-fructose and D-mannitol in the mannitol metabolic pathway. The sequence is that of Mannitol 2-dehydrogenase from Aspergillus niger (strain ATCC MYA-4892 / CBS 513.88 / FGSC A1513).